The following is a 307-amino-acid chain: MPTLPGSLTLVKGIKPQPLVSLANFTSWRVGGPAEWFASPSSVEELQTLIAWAYEQKMPCRVIGAGSNLLINDTGLPGLSLCMRKLQGSDLDPKTGIVEALAGEPIPNLSKRAAKVGLHGLEWAVGIPGTVGGAAVMNAGAQGGCTADWLESVQVLDLNGEGPFELSRQELDYAYRQSLLQEKTLVVLSARFRLDPGHDHKELNQITQQNLTHRTTTQPYQLPSCGSVFRNPEPLKAGRLIEALGLKGHRIGGAEVSPIHANFIVNIGGATAADINQMITLIQQRVQMAHGVMLHPEVKRLGFEATA.

An FAD-binding PCMH-type domain is found at 29–197 (RVGGPAEWFA…LSARFRLDPG (169 aa)). Residue R176 is part of the active site. S227 (proton donor) is an active-site residue. Residue E297 is part of the active site.

Belongs to the MurB family. The cofactor is FAD.

It localises to the cytoplasm. It carries out the reaction UDP-N-acetyl-alpha-D-muramate + NADP(+) = UDP-N-acetyl-3-O-(1-carboxyvinyl)-alpha-D-glucosamine + NADPH + H(+). It functions in the pathway cell wall biogenesis; peptidoglycan biosynthesis. Functionally, cell wall formation. The sequence is that of UDP-N-acetylenolpyruvoylglucosamine reductase from Prochlorococcus marinus (strain MIT 9313).